The primary structure comprises 415 residues: Ubp4-interactor sfp47 (415 aa).

Ser221 and Ser226 each carry phosphoserine. Thr231 carries the phosphothreonine modification. Ser235 carries the phosphoserine modification. Residues 352 to 415 enclose the SH3 domain; that stretch reads PIFAYVRALY…PSNYIEELEY (64 aa).

Interacts with ubp4.

The protein localises to the cytoplasm. It localises to the endosome. Functionally, required for the regulation of activity and recruitment of ubp4 to endosomes. This Schizosaccharomyces pombe (strain 972 / ATCC 24843) (Fission yeast) protein is Ubp4-interactor sfp47 (sfp47).